The following is a 151-amino-acid chain: SsrA-binding protein (151 aa).

Positions 132 to 151 (KRQTIKKRDQDREIHRKYGI) are disordered.

Belongs to the SmpB family.

The protein resides in the cytoplasm. In terms of biological role, required for rescue of stalled ribosomes mediated by trans-translation. Binds to transfer-messenger RNA (tmRNA), required for stable association of tmRNA with ribosomes. tmRNA and SmpB together mimic tRNA shape, replacing the anticodon stem-loop with SmpB. tmRNA is encoded by the ssrA gene; the 2 termini fold to resemble tRNA(Ala) and it encodes a 'tag peptide', a short internal open reading frame. During trans-translation Ala-aminoacylated tmRNA acts like a tRNA, entering the A-site of stalled ribosomes, displacing the stalled mRNA. The ribosome then switches to translate the ORF on the tmRNA; the nascent peptide is terminated with the 'tag peptide' encoded by the tmRNA and targeted for degradation. The ribosome is freed to recommence translation, which seems to be the essential function of trans-translation. This Lactobacillus johnsonii (strain CNCM I-12250 / La1 / NCC 533) protein is SsrA-binding protein.